The chain runs to 213 residues: Maleamate amidohydrolase (213 aa).

The active-site Nucleophile is C154.

The protein belongs to the isochorismatase family.

The enzyme catalyses maleamate + H2O = maleate + NH4(+). It participates in cofactor degradation; nicotinate degradation. In terms of biological role, maleamate amidase that transforms maleamate into maleate and ammonia in the aerobic nicotinate degradation pathway. The polypeptide is Maleamate amidohydrolase (nicF) (Pseudomonas putida (strain ATCC 47054 / DSM 6125 / CFBP 8728 / NCIMB 11950 / KT2440)).